Consider the following 403-residue polypeptide: Alkaline protease 1 (403 aa).

The N-terminal stretch at 1-21 (MLSIKRTLLLLGAVLPAVFGA) is a signal peptide. Positions 22–125 (PVQETRRAAQ…QIWYLDALTT (104 aa)) are excised as a propeptide. The region spanning 36–120 (KYIVTFKPGT…HVEEDQIWYL (85 aa)) is the Inhibitor I9 domain. One can recognise a Peptidase S8 domain in the interval 130–403 (PWGLGSISHK…PNKLAYNGNA (274 aa)). Active-site charge relay system residues include aspartate 162 and histidine 193. N-linked (GlcNAc...) asparagine glycans are attached at residues asparagine 253 and asparagine 307. Residue serine 349 is the Charge relay system of the active site. N-linked (GlcNAc...) asparagine glycosylation is present at asparagine 367.

This sequence belongs to the peptidase S8 family.

It localises to the secreted. It catalyses the reaction Hydrolysis of proteins with broad specificity, and of Bz-Arg-OEt &gt; Ac-Tyr-OEt. Does not hydrolyze peptide amides.. Secreted alkaline protease that allows assimilation of proteinaceous substrates. Acts as a significant virulence factor in invasive aspergillosis. Involved in immune evasion from the human and mice complement systems during infection. Efficiently cleaves important components of the complement cascade such as such as C3, C4, C5, and C1q, as well as IgG, which leads to down-regulation of complement activation at the hyphal surface. This Aspergillus fumigatus (strain CBS 144.89 / FGSC A1163 / CEA10) (Neosartorya fumigata) protein is Alkaline protease 1 (alp1).